A 300-amino-acid polypeptide reads, in one-letter code: tRNA dimethylallyltransferase (300 aa).

11–18 (GPTAVGKS) provides a ligand contact to ATP. Residue 13–18 (TAVGKS) participates in substrate binding. Positions 35-38 (DSVQ) are interaction with substrate tRNA.

Belongs to the IPP transferase family. As to quaternary structure, monomer. Requires Mg(2+) as cofactor.

The enzyme catalyses adenosine(37) in tRNA + dimethylallyl diphosphate = N(6)-dimethylallyladenosine(37) in tRNA + diphosphate. In terms of biological role, catalyzes the transfer of a dimethylallyl group onto the adenine at position 37 in tRNAs that read codons beginning with uridine, leading to the formation of N6-(dimethylallyl)adenosine (i(6)A). In Borrelia hermsii (strain HS1 / DAH), this protein is tRNA dimethylallyltransferase.